Here is a 163-residue protein sequence, read N- to C-terminus: Putative pre-16S rRNA nuclease (163 aa).

This sequence belongs to the YqgF nuclease family.

It is found in the cytoplasm. In terms of biological role, could be a nuclease involved in processing of the 5'-end of pre-16S rRNA. The chain is Putative pre-16S rRNA nuclease from Rhodopseudomonas palustris (strain BisB18).